Consider the following 443-residue polypeptide: Zinc finger protein ZIC 1 (443 aa).

A C2H2-type 1; atypical zinc finger spans residues 221–256; the sequence is LICKWIEPEQLANPKKSCNKTFSTMHELVTHVTVEH. A C2H2-type 2; atypical zinc finger spans residues 265-292; the sequence is HICVWEECPREGKPFKAKYKLINHIRVH. 3 C2H2-type zinc fingers span residues 298–322, 328–352, and 358–380; these read FPCPFPGCGKVFARSENLKIHKRTH, FKCEFEGCDRRFANSSDRKKHMHVH, and YLCKMCDKSYTHPSSLRKHMKVH. A disordered region spans residues 371-433; it reads SSLRKHMKVH…AVHHTSNHST (63 aa). Positions 383 to 396 are enriched in low complexity; sequence SSQGSQPSPAASSG. Positions 397–413 are enriched in polar residues; it reads YESSTPPTIVSPSAENQ. The segment at 408-443 is negatively regulates transcriptional activity; the sequence is PSAENQSTSSLSPSSSAVHHTSNHSTLSSNFNEWYV. Low complexity predominate over residues 414-433; sequence STSSLSPSSSAVHHTSNHST.

Belongs to the GLI C2H2-type zinc-finger protein family. During early gastrula stages, widely expressed in the dorsal ectoderm. At mid-gastrula, expressed throughout the presumptive neural plate and at late gastrula, expression gradually diminishes in the dorsal midline and increases in the anterior folds. By early neurula stage, expression becomes restricted to the lateral edges of the neural plate, corresponding to the presumptive dorsal neural plate and neural crest, and in flanking ectoderm. In early tailbud stages (stages 22-23), expressed in the dorsal forebrain, midbrain and hindbrain. Subsequently expressed in the telencephalon and at the diencephalon/mesencephalon boundary. In the spinal cord, expression is restricted to the dorsal most region including the roof plate. Also expressed in the somites but not in eye vesicles. At larval stages, expressed mainly in the dorsal neural tube throughout its anteroposterior axis.

The protein resides in the nucleus. It localises to the cytoplasm. Its function is as follows. Transcriptional activator that induces expression of multiple genes including pax3, en2, snai2/slug, feb and a subset of wnt genes. Has multiple key roles in the regulation of neural induction and neurogenesis: acts as a neural competence factor, sensitizing the presumptive neuroectoderm to respond to subsequent neuralizing signals. Promotes both preplacodal cell fates and neural crest cell fates, two of the cell populations that arise from the neural plate border. Cooperates with pax3 in concert with wnt signaling to determine neural crest fate. Synergizes with the bmp-inhibitor noggin/nog and acts through the wnt pathway to induce expression of en2. May bind to the minimal GLI-consensus sequence 5'-TGGGTGGTC-3'. The chain is Zinc finger protein ZIC 1 (zic1) from Xenopus laevis (African clawed frog).